The sequence spans 139 residues: Asp-hemolysin (139 aa).

A propeptide spanning residues methionine 1–glutamine 5 is cleaved from the precursor. The disordered stretch occupies residues threonine 47–glycine 79. Residues valine 62–glycine 75 are compositionally biased toward polar residues.

The protein belongs to the aegerolysin family.

The chain is Asp-hemolysin from Aspergillus fumigatus (strain ATCC MYA-4609 / CBS 101355 / FGSC A1100 / Af293) (Neosartorya fumigata).